An 85-amino-acid polypeptide reads, in one-letter code: Large ribosomal subunit protein bL27 (85 aa).

Positions 1-20 are disordered; sequence MAHKKAGGSTRNGRDSEAKR.

It belongs to the bacterial ribosomal protein bL27 family.

In Serratia proteamaculans (strain 568), this protein is Large ribosomal subunit protein bL27.